A 450-amino-acid polypeptide reads, in one-letter code: 3-phosphoshikimate 1-carboxyvinyltransferase (450 aa).

A disordered region spans residues 1-26 (MSGHGTPIPMTSRRASPLKGEAHVPG). Lysine 28, serine 29, and arginine 33 together coordinate 3-phosphoshikimate. Lysine 28 contributes to the phosphoenolpyruvate binding site. Positions 101 and 129 each coordinate phosphoenolpyruvate. 3-phosphoshikimate-binding residues include serine 174, glutamine 176, aspartate 327, and lysine 354. Glutamine 176 contacts phosphoenolpyruvate. The active-site Proton acceptor is aspartate 327. The phosphoenolpyruvate site is built by arginine 358 and arginine 403.

The protein belongs to the EPSP synthase family. As to quaternary structure, monomer.

Its subcellular location is the cytoplasm. It catalyses the reaction 3-phosphoshikimate + phosphoenolpyruvate = 5-O-(1-carboxyvinyl)-3-phosphoshikimate + phosphate. It participates in metabolic intermediate biosynthesis; chorismate biosynthesis; chorismate from D-erythrose 4-phosphate and phosphoenolpyruvate: step 6/7. In terms of biological role, catalyzes the transfer of the enolpyruvyl moiety of phosphoenolpyruvate (PEP) to the 5-hydroxyl of shikimate-3-phosphate (S3P) to produce enolpyruvyl shikimate-3-phosphate and inorganic phosphate. This Ruegeria sp. (strain TM1040) (Silicibacter sp.) protein is 3-phosphoshikimate 1-carboxyvinyltransferase.